A 157-amino-acid polypeptide reads, in one-letter code: Electron transfer flavoprotein regulatory factor 1 homolog (157 aa).

It belongs to the complex I LYR family.

Its subcellular location is the mitochondrion. This is Electron transfer flavoprotein regulatory factor 1 homolog from Dictyostelium discoideum (Social amoeba).